We begin with the raw amino-acid sequence, 141 residues long: Hemoglobin subunit alpha-D (141 aa).

In terms of domain architecture, Globin spans 1–141 (MLTADDKKLI…VASVLAEKYR (141 aa)). Residues H58 and H87 each contribute to the heme b site.

It belongs to the globin family. As to quaternary structure, heterotetramer of two alpha-D chains and two beta chains. As to expression, red blood cells.

In terms of biological role, involved in oxygen transport from the lung to the various peripheral tissues. The protein is Hemoglobin subunit alpha-D (HBAD) of Rhea americana (Greater rhea).